The following is a 362-amino-acid chain: Porin Omp2b (362 aa).

A signal peptide spans 1-22; the sequence is MNIKSLLLGSAAALVAASGAQA.

Belongs to the alphaproteobacteria porin family. In terms of assembly, homotrimer.

It localises to the cell outer membrane. Forms passive diffusion pores that allow small molecular weight hydrophilic materials across the outer membrane. The chain is Porin Omp2b (omp2b) from Brucella abortus (strain S19).